The following is a 338-amino-acid chain: Glyceraldehyde-3-phosphate dehydrogenase (338 aa).

NAD(+)-binding positions include 12–13 (RI), D34, and R79. Residues 150–152 (SCT), T181, 210–211 (TG), and R233 each bind D-glyceraldehyde 3-phosphate. C151 acts as the Nucleophile in catalysis. N316 is a binding site for NAD(+).

This sequence belongs to the glyceraldehyde-3-phosphate dehydrogenase family. As to quaternary structure, homotetramer.

The protein localises to the cytoplasm. The catalysed reaction is D-glyceraldehyde 3-phosphate + phosphate + NAD(+) = (2R)-3-phospho-glyceroyl phosphate + NADH + H(+). Its pathway is carbohydrate degradation; glycolysis; pyruvate from D-glyceraldehyde 3-phosphate: step 1/5. In Phaffia rhodozyma (Yeast), this protein is Glyceraldehyde-3-phosphate dehydrogenase (GPD).